We begin with the raw amino-acid sequence, 229 residues long: Heptaprenylglyceryl phosphate synthase (229 aa).

Lys12 serves as a coordination point for sn-glycerol 1-phosphate. Positions 14 and 40 each coordinate Mg(2+). Sn-glycerol 1-phosphate is bound by residues 159-164, Gly189, and 209-210; these read YLEYSG and GN.

The protein belongs to the GGGP/HepGP synthase family. Group I subfamily. Homodimer. Requires Mg(2+) as cofactor.

It carries out the reaction sn-glycerol 1-phosphate + all-trans-heptaprenyl diphosphate = 3-heptaprenyl-sn-glycero-1-phosphate + diphosphate. The protein operates within membrane lipid metabolism; glycerophospholipid metabolism. Prenyltransferase that catalyzes in vivo the transfer of the heptaprenyl moiety of heptaprenyl pyrophosphate (HepPP; 35 carbon atoms) to the C3 hydroxyl of sn-glycerol-1-phosphate (G1P), producing heptaprenylglyceryl phosphate (HepGP). This reaction is an ether-bond-formation step in the biosynthesis of archaea-type G1P-based membrane lipids found in Bacillales. This is Heptaprenylglyceryl phosphate synthase from Bacillus anthracis (strain A0248).